The sequence spans 218 residues: MNQLIVRQLGVQPYEEIWHQMQDFTDNRNENTADEIWLVQHPSVFTQGSAGKPEHLLNPTNIPVVQTDRGGQITYHGEGQQVMYVLIDIKRLKAQGKDVSVRDLVTALEQCVVKTLADYGIEGYPKPDAPGVYINGKKICSLGLRIRQGRSFHGLAFNVNMDLTPFRNINPCGYAGLEMTQLKDYIAESEAQCDLVSPKLVAHFYNILGYNAQQIINK.

Residues 30–212 form the BPL/LPL catalytic domain; the sequence is ENTADEIWLV…HFYNILGYNA (183 aa). Substrate-binding positions include 69-76, 141-143, and 154-156; these read RGGQITYH, SLG, and GLA. Cys-172 acts as the Acyl-thioester intermediate in catalysis.

Belongs to the LipB family.

It is found in the cytoplasm. It carries out the reaction octanoyl-[ACP] + L-lysyl-[protein] = N(6)-octanoyl-L-lysyl-[protein] + holo-[ACP] + H(+). It participates in protein modification; protein lipoylation via endogenous pathway; protein N(6)-(lipoyl)lysine from octanoyl-[acyl-carrier-protein]: step 1/2. Its function is as follows. Catalyzes the transfer of endogenously produced octanoic acid from octanoyl-acyl-carrier-protein onto the lipoyl domains of lipoate-dependent enzymes. Lipoyl-ACP can also act as a substrate although octanoyl-ACP is likely to be the physiological substrate. The chain is Octanoyltransferase from Actinobacillus pleuropneumoniae serotype 5b (strain L20).